A 447-amino-acid chain; its full sequence is Nisin biosynthesis sensor protein NisK (447 aa).

2 helical membrane-spanning segments follow: residues 15–35 (VIEI…LTFF) and 147–167 (TYLF…YHLI). The 213-residue stretch at 235–447 (ALSHDVKTPL…GAEVILKIKK (213 aa)) folds into the Histidine kinase domain. Residue His238 is modified to Phosphohistidine; by autocatalysis.

The protein resides in the cell membrane. The enzyme catalyses ATP + protein L-histidine = ADP + protein N-phospho-L-histidine.. Member of the two-component regulatory system NisK/NisR involved in the regulation of the biosynthesis of lantibiotic nisin. NisK may function as a membrane-associated protein kinase that phosphorylates NisR in response to environmental signals. This Lactococcus lactis subsp. lactis (Streptococcus lactis) protein is Nisin biosynthesis sensor protein NisK (nisK).